The chain runs to 1066 residues: Ribosomal protein S6 kinase delta-1 (1066 aa).

Residues 8–132 (SADLARFYTV…DFFKGGIIND (125 aa)) enclose the PX domain. The tract at residues 207 to 228 (VASDSEQSKTEEERESRSLFPG) is disordered. Residues 212-223 (EQSKTEEERESR) show a composition bias toward basic and acidic residues. Positions 277–305 (VQGESSPTRREAVKRRTAEYLMRAESISS) constitute an MIT domain. S282, S423, S427, S449, and S455 each carry phosphoserine. In terms of domain architecture, Protein kinase 1 spans 344–445 (GVIDKVLLVM…PTLAKVHLQQ (102 aa)). The tract at residues 441 to 509 (VHLQQPTSSP…SGSSSEEECT (69 aa)) is disordered. The segment covering 448-458 (SSPQDSSSFES) has biased composition (low complexity). Residues 474–483 (SSLTPSSQDD) show a composition bias toward polar residues. Residues 492–503 (DSSPKWPDSGSS) are compositionally biased toward low complexity. 10 positions are modified to phosphoserine: S494, S528, S583, S605, S608, S640, S661, S664, S667, and S794. Positions 553–596 (HLAADSDSPSTQLRAHELKFFPNDDPEAVSSPRTSDSLSRSKNS) are disordered. A compositionally biased stretch (low complexity) spans 582 to 593 (SSPRTSDSLSRS). Residues 794 to 1056 (SSDPKFQGLG…VEDIKSHPFF (263 aa)) enclose the Protein kinase 2 domain. ATP contacts are provided by residues 801 to 809 (GLGVVESAV) and R820. S872 bears the Phosphoserine mark. D929 (proton acceptor) is an active-site residue.

It belongs to the protein kinase superfamily. Ser/Thr protein kinase family. S6 kinase subfamily. Interacts with SPHK1 and phosphatidylinositol 3-phosphate. Interacts (via PX domain) with PRDX3. In terms of tissue distribution, highly expressed in testis, skeletal muscle, brain, heart, placenta, kidney and liver and weakly expressed in thymus, small intestine, lung and colon.

Its subcellular location is the cytoplasm. It localises to the membrane. It is found in the early endosome. The catalysed reaction is L-seryl-[protein] + ATP = O-phospho-L-seryl-[protein] + ADP + H(+). It catalyses the reaction L-threonyl-[protein] + ATP = O-phospho-L-threonyl-[protein] + ADP + H(+). Functionally, may be involved in transmitting sphingosine-1 phosphate (SPP)-mediated signaling into the cell. Plays a role in the recruitment of PRDX3 to early endosomes. This Homo sapiens (Human) protein is Ribosomal protein S6 kinase delta-1 (RPS6KC1).